The following is a 255-amino-acid chain: Small ribosomal subunit protein eS1B (255 aa).

At A2 the chain carries N-acetylalanine; partial. At S245 the chain carries Phosphoserine. K248 is covalently cross-linked (Glycyl lysine isopeptide (Lys-Gly) (interchain with G-Cter in ubiquitin)). T254 carries the post-translational modification Phosphothreonine.

This sequence belongs to the eukaryotic ribosomal protein eS1 family. In terms of assembly, component of the small ribosomal subunit. Mature ribosomes consist of a small (40S) and a large (60S) subunit. The 40S subunit contains about 33 different proteins and 1 molecule of RNA (18S). The 60S subunit contains about 49 different proteins and 3 molecules of RNA (25S, 5.8S and 5S).

The protein resides in the cytoplasm. The polypeptide is Small ribosomal subunit protein eS1B (Saccharomyces cerevisiae (strain RM11-1a) (Baker's yeast)).